We begin with the raw amino-acid sequence, 130 residues long: Holo-[acyl-carrier-protein] synthase (130 aa).

The Mg(2+) site is built by Asp-9 and Glu-58.

This sequence belongs to the P-Pant transferase superfamily. AcpS family. Requires Mg(2+) as cofactor.

It is found in the cytoplasm. The catalysed reaction is apo-[ACP] + CoA = holo-[ACP] + adenosine 3',5'-bisphosphate + H(+). In terms of biological role, transfers the 4'-phosphopantetheine moiety from coenzyme A to a Ser of acyl-carrier-protein. This is Holo-[acyl-carrier-protein] synthase from Mycobacterium bovis (strain ATCC BAA-935 / AF2122/97).